The chain runs to 132 residues: Ribonuclease P protein component (132 aa).

It belongs to the RnpA family. As to quaternary structure, consists of a catalytic RNA component (M1 or rnpB) and a protein subunit.

The enzyme catalyses Endonucleolytic cleavage of RNA, removing 5'-extranucleotides from tRNA precursor.. In terms of biological role, RNaseP catalyzes the removal of the 5'-leader sequence from pre-tRNA to produce the mature 5'-terminus. It can also cleave other RNA substrates such as 4.5S RNA. The protein component plays an auxiliary but essential role in vivo by binding to the 5'-leader sequence and broadening the substrate specificity of the ribozyme. The protein is Ribonuclease P protein component of Marinomonas sp. (strain MWYL1).